Consider the following 159-residue polypeptide: Style cell-cycle inhibitor 1 (159 aa).

The segment at 1–86 (MVSERSSKEK…SDHKLKEGIP (86 aa)) is disordered. Positions 15-50 (ARSEDSSSSDYEEKVKRHRGTEKDDERRSRRSDKKD) are enriched in basic and acidic residues. Residues 51 to 63 (KKSHKHHKSSTSK) are compositionally biased toward basic residues. Residues 64 to 85 (KSKDDKPKKKHTESDHKLKEGI) are compositionally biased toward basic and acidic residues.

It localises to the nucleus. Its function is as follows. Component of the auxin signaling transduction pathway that regulates cell proliferation and differentiation during flowers stigmas and styles development. Involved in the regulation of auxin-related genes. The chain is Style cell-cycle inhibitor 1 from Arabidopsis thaliana (Mouse-ear cress).